The primary structure comprises 65 residues: Putative antitoxin VapB7 (65 aa).

It belongs to the UPF0165 family.

Its function is as follows. Possibly the antitoxin component of a type II toxin-antitoxin (TA) system. Its cognate toxin is VapC7 (Potential). The sequence is that of Putative antitoxin VapB7 (vapB7) from Archaeoglobus fulgidus (strain ATCC 49558 / DSM 4304 / JCM 9628 / NBRC 100126 / VC-16).